The following is a 426-amino-acid chain: Putative phosphate permease CT_962 (426 aa).

The next 11 membrane-spanning stretches (helical) occupy residues 1–21 (MWLL…NIGA), 37–57 (LTLK…AVLL), 83–103 (VFGM…ASFC), 104–124 (GWPV…GIIL), 140–160 (VSWL…FSFI), 183–203 (AIII…APVI), 207–227 (PALR…IWGI), 260–280 (LIVE…MSFA), 309–329 (VLLV…ATWG), 365–385 (LGFP…IGFA), and 399–419 (IVLS…VFFL).

The protein belongs to the inorganic phosphate transporter (PiT) (TC 2.A.20) family.

The protein resides in the cell membrane. Its function is as follows. Potential transporter for phosphate. The sequence is that of Putative phosphate permease CT_962 from Chlamydia trachomatis serovar D (strain ATCC VR-885 / DSM 19411 / UW-3/Cx).